Here is a 181-residue protein sequence, read N- to C-terminus: Protein Syd (181 aa).

This sequence belongs to the Syd family.

It is found in the cell inner membrane. Functionally, interacts with the SecY protein in vivo. May bind preferentially to an uncomplexed state of SecY, thus functioning either as a chelating agent for excess SecY in the cell or as a regulatory factor that negatively controls the translocase function. This is Protein Syd from Alteromonas mediterranea (strain DSM 17117 / CIP 110805 / LMG 28347 / Deep ecotype).